The chain runs to 167 residues: DNA-directed RNA polymerase II subunit rpb-9 (167 aa).

Residues aspartate 28–serine 49 are disordered. Over residues asparagine 34 to glutamate 44 the composition is skewed to polar residues. Cysteine 59, cysteine 62, cysteine 81, cysteine 84, cysteine 128, cysteine 131, cysteine 156, and cysteine 161 together coordinate Zn(2+). The C4-type zinc-finger motif lies at cysteine 59 to cysteine 84. The segment at glutamate 124 to threonine 166 adopts a TFIIS-type zinc-finger fold.

It belongs to the archaeal RpoM/eukaryotic RPA12/RPB9/RPC11 RNA polymerase family. In terms of assembly, component of the RNA polymerase II (Pol II) complex consisting of 12 subunits. As to expression, expressed in the soma and in the germline.

It localises to the nucleus. The protein localises to the nucleolus. Functionally, DNA-dependent RNA polymerase catalyzes the transcription of DNA into RNA using the four ribonucleoside triphosphates as substrates. Component of RNA polymerase II which synthesizes mRNA precursors and many functional non-coding RNAs. Pol II is the central component of the basal RNA polymerase II transcription machinery. It is composed of mobile elements that move relative to each other. RPB9 is part of the upper jaw surrounding the central large cleft and thought to grab the incoming DNA template. Recruits ints-6, a component of the Integrator complex to PIWI-interacting RNA (piRNA) genes, to mediate Integrator complex-dependent cleavage of 3' ends of nascent transcripts upon RNA Pol II backtracking to terminate transcription and generate piRNA precursors. Promotes the biogenesis of secondary 22G-siRNAs (a class of 22 nucleotide siRNAs that possess a triphosphorylated guanine residue at the 5'-end). Involved in gene silencing mediated by a class of 21 nucleotide piRNAs that possess a uracil residue at the 5'-end (also called 21U-RNAs) and guide the Piwi protein prg-1 to its DNA targets for silencing. Plays a role in small RNA-directed transgenerational epigenetic inheritance (also called RNAe) over several generations. Not required for the transgenerational inheritance of exogenous small interfering RNAs (RNAi). May play a role in the silencing of the DNA transposable elements from the DNA transposon families, Chapaev-2 and CEMUDR1. This is DNA-directed RNA polymerase II subunit rpb-9 from Caenorhabditis elegans.